Here is a 253-residue protein sequence, read N- to C-terminus: Zinc import ATP-binding protein ZnuC (253 aa).

Positions 6-227 (VTLNKISVTF…FGNRGAEQLA (222 aa)) constitute an ABC transporter domain. 38–45 (GPNGAGKS) is a binding site for ATP.

The protein belongs to the ABC transporter superfamily. Zinc importer (TC 3.A.1.15.5) family. In terms of assembly, the complex is composed of two ATP-binding proteins (ZnuC), two transmembrane proteins (ZnuB) and a solute-binding protein (ZnuA).

It localises to the cell inner membrane. The catalysed reaction is Zn(2+)(out) + ATP(in) + H2O(in) = Zn(2+)(in) + ADP(in) + phosphate(in) + H(+)(in). Part of the ABC transporter complex ZnuABC involved in zinc import. Responsible for energy coupling to the transport system. The polypeptide is Zinc import ATP-binding protein ZnuC (Yersinia pestis bv. Antiqua (strain Antiqua)).